A 1173-amino-acid chain; its full sequence is Inner capsid protein VP3 (1173 aa).

The segment at Met1–Thr53 is disordered. Over residues Ser9 to Gly21 the composition is skewed to basic and acidic residues. Over residues Asp33–Thr53 the composition is skewed to polar residues.

The protein belongs to the turreted BTV-fold inner capsid family. Homodecamer; each decamer is made up of two conformers of VP2, called VP2A and VP2B. 12 homodecamers assemble to form an icosahedral capsid.

Its subcellular location is the virion. Functionally, inner capsid protein that self-assembles to form an icosahedral capsid with a T=2 symmetry, which consists of 120 copies of VP2, with channels at each of its five-fold vertices. This capsid constitutes the innermost concentric layer of the viral mature particle. The polypeptide is Inner capsid protein VP3 (Rice ragged stunt virus (isolate Thailand) (RRSV)).